Consider the following 230-residue polypeptide: Uracil-DNA glycosylase (230 aa).

Aspartate 70 serves as the catalytic Proton acceptor.

This sequence belongs to the uracil-DNA glycosylase (UDG) superfamily. UNG family.

It is found in the cytoplasm. The catalysed reaction is Hydrolyzes single-stranded DNA or mismatched double-stranded DNA and polynucleotides, releasing free uracil.. Its function is as follows. Excises uracil residues from the DNA which can arise as a result of misincorporation of dUMP residues by DNA polymerase or due to deamination of cytosine. The protein is Uracil-DNA glycosylase of Pseudomonas syringae pv. tomato (strain ATCC BAA-871 / DC3000).